The chain runs to 354 residues: DNA integrity scanning protein DisA (354 aa).

The DAC domain maps to 6–144 (GMKIKDTLKI…GDIKYVLRDS (139 aa)). Residues G73, L91, and 104–108 (TRHRT) contribute to the ATP site.

This sequence belongs to the DisA family. As to quaternary structure, homooctamer. The cofactor is Mg(2+).

It catalyses the reaction 2 ATP = 3',3'-c-di-AMP + 2 diphosphate. Its function is as follows. Participates in a DNA-damage check-point that is active prior to asymmetric division when DNA is damaged. DisA forms globular foci that rapidly scan along the chromosomes during sporulation, searching for lesions. When a lesion is present, DisA pauses at the lesion site. This triggers a cellular response that culminates in a temporary block in sporulation initiation. Functionally, also has diadenylate cyclase activity, catalyzing the condensation of 2 ATP molecules into cyclic di-AMP (c-di-AMP). c-di-AMP acts as a signaling molecule that couples DNA integrity with progression of sporulation. The rise in c-di-AMP level generated by DisA while scanning the chromosome, operates as a positive signal that advances sporulation; upon encountering a lesion, the DisA focus arrests at the damaged site and halts c-di-AMP synthesis. This Clostridium botulinum (strain Alaska E43 / Type E3) protein is DNA integrity scanning protein DisA.